A 1159-amino-acid polypeptide reads, in one-letter code: WASH complex subunit 5 (1159 aa).

This sequence belongs to the strumpellin family. In terms of assembly, component of the WASH complex.

Its subcellular location is the early endosome. In terms of biological role, acts at least in part as component of the WASH complex which seems to regulate washc1 nucleation-promoting factor (NPF) activity and is required for its membrane targeting during endosomal sorting. The chain is WASH complex subunit 5 from Xenopus tropicalis (Western clawed frog).